Here is a 383-residue protein sequence, read N- to C-terminus: 2-methylcitrate synthase 2 (383 aa).

Substrate contacts are provided by Arg-73 and His-195. Residue His-230 is part of the active site. 263-267 (VVMGF) provides a ligand contact to CoA. The active site involves His-269. Position 278 (Arg-278) interacts with substrate. Asp-320 is a catalytic residue. Residues Arg-345 and Arg-364 each contribute to the substrate site.

Belongs to the citrate synthase family. In terms of assembly, homodimer.

The enzyme catalyses propanoyl-CoA + oxaloacetate + H2O = (2S,3S)-2-methylcitrate + CoA + H(+). The catalysed reaction is oxaloacetate + acetyl-CoA + H2O = citrate + CoA + H(+). The protein operates within organic acid metabolism; propanoate degradation. It functions in the pathway carbohydrate metabolism; tricarboxylic acid cycle; isocitrate from oxaloacetate: step 1/2. Involved in the catabolism of short chain fatty acids (SCFA) via the tricarboxylic acid (TCA)(acetyl degradation route) and via the 2-methylcitrate cycle I (propionate degradation route). Catalyzes the Claisen condensation of propionyl-CoA and oxaloacetate (OAA) to yield 2-methylcitrate (2-MC) and CoA. Also catalyzes the condensation of oxaloacetate with acetyl-CoA but with a lower specificity. This Corynebacterium glutamicum (strain ATCC 13032 / DSM 20300 / JCM 1318 / BCRC 11384 / CCUG 27702 / LMG 3730 / NBRC 12168 / NCIMB 10025 / NRRL B-2784 / 534) protein is 2-methylcitrate synthase 2 (prpC2).